A 110-amino-acid polypeptide reads, in one-letter code: UPF0060 membrane protein RSp1275 (110 aa).

Helical transmembrane passes span 8–28, 33–53, 63–83, and 90–110; these read FLFALTALAEIVGCYLPWLVL, SAWLLMPAALSLALFAWLLTL, AAYGGMYIAVALAWLRVVDGA, and IGGAAIALAGMAVIALQPQPT.

It belongs to the UPF0060 family.

It localises to the cell inner membrane. In Ralstonia nicotianae (strain ATCC BAA-1114 / GMI1000) (Ralstonia solanacearum), this protein is UPF0060 membrane protein RSp1275.